A 1273-amino-acid chain; its full sequence is Protein transport protein SEC31 (1273 aa).

7 WD repeats span residues 6–46, 60–99, 106–146, 158–198, 207–250, 255–295, and 298–338; these read EFSR…ELWS, QVDS…NAIN, NHSS…ESPS, SSVD…EVIH, GIKQ…TPLQ, GHQK…QLSQ, and ARGN…NTLD. Ser349 bears the Phosphoserine mark. A WD 8; interaction with SEC13 repeat occupies 385-405; that stretch reads HWAFGGKLVQITPDGKGVSIT. Residues 815-835 are disordered; it reads TTSAPVHTEGKYAPPSQPSMA. Phosphoserine occurs at positions 836, 974, 977, 980, 988, 992, and 999. The tract at residues 933 to 1162 is disordered; it reads PSRAKAVSVA…SQVNTSAENV (230 aa). Positions 994–1039 are enriched in polar residues; that stretch reads VATSESPRASISNPYAPPQSSQQFPIGTISTANQTSNTAQVASSNP. Phosphothreonine is present on Thr1050. Position 1053 is a phosphoserine (Ser1053). Over residues 1071–1094 the composition is skewed to polar residues; the sequence is TATTQPNGSSYPPTGPYTNNHTMT. A compositionally biased stretch (pro residues) spans 1095 to 1110; that stretch reads SPPPVFNKPPTGPPPI. Residues 1118–1129 are compositionally biased toward polar residues; that stretch reads KLASIEQNPSQG. The span at 1130-1154 shows a compositional bias: low complexity; the sequence is ATYPPTLSSSASPLQPSQPPTLASQ.

This sequence belongs to the WD repeat SEC31 family. In terms of assembly, the COPII coat is composed of at least 5 proteins: the SEC23/24 complex, the SEC13/31 complex, and the protein SAR1. SEC13 and SEC31 make a 2:2 tetramer that forms the edge element of the COPII outer coat. The tetramer self-assembles in multiple copies to form the complete polyhedral cage. Interacts (via WD 8) with SEC13. Interacts with EMP24, ERV25, SEC16 and SHR3.

It is found in the cytoplasmic vesicle. It localises to the COPII-coated vesicle membrane. The protein resides in the endoplasmic reticulum membrane. In terms of biological role, component of the coat protein complex II (COPII) which promotes the formation of transport vesicles from the endoplasmic reticulum (ER). The coat has two main functions, the physical deformation of the endoplasmic reticulum membrane into vesicles and the selection of cargo molecules. The chain is Protein transport protein SEC31 (SEC31) from Saccharomyces cerevisiae (strain ATCC 204508 / S288c) (Baker's yeast).